The primary structure comprises 386 residues: Methionine aminopeptidase 1 (386 aa).

The residue at position 2 (Ala2) is an N-acetylalanine. The segment at 6-59 adopts a C6H2-type zinc-finger fold; it reads TRVCETDGCSSEAKLQCPTCIKLGIQGSYFCSQECFKGSWATHKLLHKKAKDEK. Positions 9, 14, 22, 25, 36, 40, 48, 52, and 53 each coordinate Zn(2+). Position 203 (His203) interacts with a protein. Residues Asp220, Asp231, and His294 each coordinate Zn(2+). His301 contacts a protein. 2 residues coordinate Zn(2+): Glu327 and Glu358.

It belongs to the peptidase M24A family. Methionine aminopeptidase type 1 subfamily. As to quaternary structure, associates with the 60S ribosomal subunit of the 80S translational complex. Zn(2+) is required as a cofactor. Co(2+) serves as cofactor. It depends on Mn(2+) as a cofactor. Requires Fe(2+) as cofactor.

It localises to the cytoplasm. The catalysed reaction is Release of N-terminal amino acids, preferentially methionine, from peptides and arylamides.. Cotranslationally removes the N-terminal methionine from nascent proteins. The N-terminal methionine is often cleaved when the second residue in the primary sequence is small and uncharged (Met-Ala-, Cys, Gly, Pro, Ser, Thr, or Val). In Mus musculus (Mouse), this protein is Methionine aminopeptidase 1 (Metap1).